We begin with the raw amino-acid sequence, 166 residues long: NAD(P)H-quinone oxidoreductase subunit I, chloroplastic (166 aa).

4Fe-4S ferredoxin-type domains are found at residues 55 to 84 (GRIHFEFDKCIACEVCVRVCPIDLPVVDWK) and 95 to 124 (LNYSIDFGICIFCGNCVEYCPTNCLSMTEE). Positions 64, 67, 70, 74, 104, 107, 110, and 114 each coordinate [4Fe-4S] cluster.

This sequence belongs to the complex I 23 kDa subunit family. As to quaternary structure, NDH is composed of at least 16 different subunits, 5 of which are encoded in the nucleus. It depends on [4Fe-4S] cluster as a cofactor.

The protein resides in the plastid. It localises to the chloroplast thylakoid membrane. The enzyme catalyses a plastoquinone + NADH + (n+1) H(+)(in) = a plastoquinol + NAD(+) + n H(+)(out). It catalyses the reaction a plastoquinone + NADPH + (n+1) H(+)(in) = a plastoquinol + NADP(+) + n H(+)(out). NDH shuttles electrons from NAD(P)H:plastoquinone, via FMN and iron-sulfur (Fe-S) centers, to quinones in the photosynthetic chain and possibly in a chloroplast respiratory chain. The immediate electron acceptor for the enzyme in this species is believed to be plastoquinone. Couples the redox reaction to proton translocation, and thus conserves the redox energy in a proton gradient. The protein is NAD(P)H-quinone oxidoreductase subunit I, chloroplastic of Calea megacephala.